A 217-amino-acid chain; its full sequence is tRNA (guanine-N(7)-)-methyltransferase (217 aa).

Positions 43, 68, 101, and 123 each coordinate S-adenosyl-L-methionine. Position 127 (Lys127) interacts with substrate. Residues 129–134 (RHNKRR) form an interaction with RNA region. Substrate is bound by residues Asp159 and 196–199 (TEYE).

Belongs to the class I-like SAM-binding methyltransferase superfamily. TrmB family.

It carries out the reaction guanosine(46) in tRNA + S-adenosyl-L-methionine = N(7)-methylguanosine(46) in tRNA + S-adenosyl-L-homocysteine. The protein operates within tRNA modification; N(7)-methylguanine-tRNA biosynthesis. Its function is as follows. Catalyzes the formation of N(7)-methylguanine at position 46 (m7G46) in tRNA. The sequence is that of tRNA (guanine-N(7)-)-methyltransferase from Clostridium botulinum (strain Langeland / NCTC 10281 / Type F).